The chain runs to 168 residues: Photosystem I assembly protein Ycf3 (168 aa).

TPR repeat units lie at residues 35 to 68 (AFTYYRDGMSAQSEGNYAEALQNYYEAMRLEIDP), 72 to 105 (SYILYNIGLIHTSNGEHTKALEYYFRALERNPFL), and 120 to 153 (GEQAIQQGDSEIAEAWFDQAAEYWKQAIALTPGN).

Belongs to the Ycf3 family.

It localises to the plastid. It is found in the chloroplast thylakoid membrane. Essential for the assembly of the photosystem I (PSI) complex. May act as a chaperone-like factor to guide the assembly of the PSI subunits. The polypeptide is Photosystem I assembly protein Ycf3 (Atropa belladonna (Belladonna)).